The primary structure comprises 185 residues: Ribosome-recycling factor (185 aa).

It belongs to the RRF family.

The protein resides in the cytoplasm. In terms of biological role, responsible for the release of ribosomes from messenger RNA at the termination of protein biosynthesis. May increase the efficiency of translation by recycling ribosomes from one round of translation to another. The chain is Ribosome-recycling factor from Campylobacter jejuni (strain RM1221).